The chain runs to 372 residues: D-alanine--D-alanine ligase (372 aa).

One can recognise an ATP-grasp domain in the interval 145–349 (KTVLRAGGIP…CPNLLDQLIE (205 aa)). 176–231 (DRWGTSELFVKAVSLGSSVATLPVKTETEFTKAVKEVFRYDDRLMVEPRIRGREIE) serves as a coordination point for ATP. Residues aspartate 303, glutamate 316, and asparagine 318 each coordinate Mg(2+).

It belongs to the D-alanine--D-alanine ligase family. It depends on Mg(2+) as a cofactor. Mn(2+) is required as a cofactor.

It localises to the cytoplasm. It carries out the reaction 2 D-alanine + ATP = D-alanyl-D-alanine + ADP + phosphate + H(+). Its pathway is cell wall biogenesis; peptidoglycan biosynthesis. Functionally, cell wall formation. The sequence is that of D-alanine--D-alanine ligase from Coxiella burnetii (strain Dugway 5J108-111).